The sequence spans 52 residues: Eukaryotic translation initiation factor 5A (52 aa).

The residue at position 42 (lysine 42) is a Hypusine.

The protein belongs to the eIF-5A family. Post-translationally, lys-42 undergoes hypusination, a unique post-translational modification that consists in the addition of a butylamino group from spermidine to lysine side chain, leading to the formation of the unusual amino acid hypusine. eIF-5As are the only known proteins to undergo this modification, which is essential for their function.

The protein localises to the cytoplasm. Functionally, translation factor that promotes translation elongation and termination, particularly upon ribosome stalling at specific amino acid sequence contexts. Binds between the exit (E) and peptidyl (P) site of the ribosome and promotes rescue of stalled ribosome: specifically required for efficient translation of polyproline-containing peptides as well as other motifs that stall the ribosome. Acts as a ribosome quality control (RQC) cofactor by joining the RQC complex to facilitate peptidyl transfer during CAT tailing step. This Schistosoma mansoni (Blood fluke) protein is Eukaryotic translation initiation factor 5A.